The chain runs to 278 residues: Bifunctional protein FolD (278 aa).

Residues Gly-163 to Ser-165, Ser-188, and Val-229 each bind NADP(+).

It belongs to the tetrahydrofolate dehydrogenase/cyclohydrolase family. In terms of assembly, homodimer.

The catalysed reaction is (6R)-5,10-methylene-5,6,7,8-tetrahydrofolate + NADP(+) = (6R)-5,10-methenyltetrahydrofolate + NADPH. The enzyme catalyses (6R)-5,10-methenyltetrahydrofolate + H2O = (6R)-10-formyltetrahydrofolate + H(+). It participates in one-carbon metabolism; tetrahydrofolate interconversion. Catalyzes the oxidation of 5,10-methylenetetrahydrofolate to 5,10-methenyltetrahydrofolate and then the hydrolysis of 5,10-methenyltetrahydrofolate to 10-formyltetrahydrofolate. In Exiguobacterium sp. (strain ATCC BAA-1283 / AT1b), this protein is Bifunctional protein FolD.